A 185-amino-acid polypeptide reads, in one-letter code: TRAF-interacting protein with FHA domain-containing protein A (185 aa).

Phosphothreonine is present on T9. Residues 48-104 form the FHA domain; that stretch reads VKFGRNSNMCQYTFQDKQVSRVQFALQPFKQFNSSVLSFEIKNMSKKTSLMVDNQEL.

The protein belongs to the TIFA family. As to quaternary structure, homooligomer; homooligomerizes following phosphorylation at Thr-9. Interacts with IRAK1, TRAF2 and TRAF6. Interacts with TIFAB; binding to TIFAB inhibits TRAF6 activation, possibly by inducing a conformational change in TIFA. Interacts with ZCCHC11; binding to ZCCHC11 suppresses the TRAF6-dependent activation of NF-kappa-B. Phosphorylated at Thr-9 following detection of ADP-D-glycero-beta-D-manno-heptose (ADP-Heptose) by ALPK1. Phosphorylation at Thr-9 by ALPK1 leads to the formation of an intermolecular binding between the FHA domain and phosphorylated Thr-9, promoting TIFA oligomerization and TIFA-mediated NF-kappa-B activation.

The protein localises to the cytoplasm. In terms of biological role, adapter molecule that plays a key role in the activation of pro-inflammatory NF-kappa-B signaling following detection of bacterial pathogen-associated molecular pattern metabolites (PAMPs). Promotes activation of an innate immune response by inducing the oligomerization and polyubiquitination of TRAF6, which leads to the activation of TAK1 and IKK through a proteasome-independent mechanism. TIFA-dependent innate immune response is triggered by ADP-D-glycero-beta-D-manno-heptose (ADP-Heptose), a potent PAMP present in all Gram-negative and some Gram-positive bacteria: ADP-Heptose is recognized by ALPK1, which phosphorylates TIFA at Thr-9, leading to TIFA homooligomerization and subsequent activation of pro-inflammatory NF-kappa-B signaling. The protein is TRAF-interacting protein with FHA domain-containing protein A of Rattus norvegicus (Rat).